The chain runs to 632 residues: Cyclic GMP-AMP synthase-like receptor 2 (632 aa).

Positions 71, 73, and 181 each coordinate Mg(2+). Aspartate 295 provides a ligand contact to Mn(2+).

It belongs to the mab-21 family. Mg(2+) is required as a cofactor. Mn(2+) serves as cofactor.

Nucleotidyltransferase that catalyzes the formation of some cyclic nucleotide and plays a key role in innate immunity. Directly binds some unknown ligand, activating the nucleotidyltransferase activity, leading to synthesis of a second messenger that binds to and activates Sting, thereby triggering the immune response via activation of the NF-kappa-B transcription factor. This is Cyclic GMP-AMP synthase-like receptor 2 from Crassostrea virginica (Eastern oyster).